A 381-amino-acid polypeptide reads, in one-letter code: Probable tRNA sulfurtransferase (381 aa).

The 109-residue stretch at 55–163 (GECLENLNKV…DDEAFIYHEK (109 aa)) folds into the THUMP domain. Residues 181–182 (LV), lysine 265, glycine 287, and glutamine 296 each bind ATP.

This sequence belongs to the ThiI family.

It localises to the cytoplasm. The catalysed reaction is [ThiI sulfur-carrier protein]-S-sulfanyl-L-cysteine + a uridine in tRNA + 2 reduced [2Fe-2S]-[ferredoxin] + ATP + H(+) = [ThiI sulfur-carrier protein]-L-cysteine + a 4-thiouridine in tRNA + 2 oxidized [2Fe-2S]-[ferredoxin] + AMP + diphosphate. It catalyses the reaction [ThiS sulfur-carrier protein]-C-terminal Gly-Gly-AMP + S-sulfanyl-L-cysteinyl-[cysteine desulfurase] + AH2 = [ThiS sulfur-carrier protein]-C-terminal-Gly-aminoethanethioate + L-cysteinyl-[cysteine desulfurase] + A + AMP + 2 H(+). It functions in the pathway cofactor biosynthesis; thiamine diphosphate biosynthesis. Catalyzes the ATP-dependent transfer of a sulfur to tRNA to produce 4-thiouridine in position 8 of tRNAs, which functions as a near-UV photosensor. Also catalyzes the transfer of sulfur to the sulfur carrier protein ThiS, forming ThiS-thiocarboxylate. This is a step in the synthesis of thiazole, in the thiamine biosynthesis pathway. The sulfur is donated as persulfide by IscS. The chain is Probable tRNA sulfurtransferase from Methanobrevibacter smithii (strain ATCC 35061 / DSM 861 / OCM 144 / PS).